A 164-amino-acid chain; its full sequence is Nucleotide-binding protein Acid345_2028 (164 aa).

The protein belongs to the YajQ family.

In terms of biological role, nucleotide-binding protein. The protein is Nucleotide-binding protein Acid345_2028 of Koribacter versatilis (strain Ellin345).